The primary structure comprises 245 residues: Ubiquinone biosynthesis O-methyltransferase (245 aa).

S-adenosyl-L-methionine-binding residues include Arg44, Gly64, Asp85, and Met129.

Belongs to the methyltransferase superfamily. UbiG/COQ3 family.

The enzyme catalyses a 3-demethylubiquinol + S-adenosyl-L-methionine = a ubiquinol + S-adenosyl-L-homocysteine + H(+). The catalysed reaction is a 3-(all-trans-polyprenyl)benzene-1,2-diol + S-adenosyl-L-methionine = a 2-methoxy-6-(all-trans-polyprenyl)phenol + S-adenosyl-L-homocysteine + H(+). The protein operates within cofactor biosynthesis; ubiquinone biosynthesis. O-methyltransferase that catalyzes the 2 O-methylation steps in the ubiquinone biosynthetic pathway. The protein is Ubiquinone biosynthesis O-methyltransferase of Proteus mirabilis (strain HI4320).